The following is an 829-amino-acid chain: MGGEKFGFLIWILSIPCLIFLCYGYVPVDNYLINCGSSTNVTVTSRVFISDNLASNFLTSPNEILAASNRNSNSDIYQTARIFTGISKYRFSVARGRHWIRLHFNPFQYQNFQMVSAKFSVSSETHVLLSDFTVSSRVMKEYSLNVATDHLELTFTPSGDSFAFLNALEVVSVPDTLFSGDPSFAGSPGKFQGLSWQALETVYRVNMGGPRVTPSNDTLSRIWEPDSEFLVEKNLVKSVSKIASVDYVPGFATEETAPRTVYGTCTEMNSADNPSSNFNVTWDFDVDPGFQYFLRFHFCDIVSKALNQLYFNLYVDSMDVVENLDLSSYLSNTLSGAYAMDFVTGSAKLTKRIRVSIGRSSVHTDYPTAILNGLEIMKMNNSKSQLSIGTFLPSGSSSTTKKNVGMIIGLTIGSLLALVVLGGFFVLYKKRGRDQDGNSKTWIPLSSNGTTSSSNGTTLASIASNSSYRIPLVAVKEATNSFDENRAIGVGGFGKVYKGELHDGTKVAVKRANPKSQQGLAEFRTEIEMLSQFRHRHLVSLIGYCDENNEMILVYEYMENGTLKSHLYGSGLLSLSWKQRLEICIGSARGLHYLHTGDAKPVIHRDVKSANILLDENLMAKVADFGLSKTGPEIDQTHVSTAVKGSFGYLDPEYFRRQQLTEKSDVYSFGVVMFEVLCARPVIDPTLTREMVNLAEWAMKWQKKGQLEHIIDPSLRGKIRPDSLRKFGETGEKCLADYGVDRPSMGDVLWNLEYALQLQEAVVDGDPEDSTNMIGELPLRFNDYNHGDTSVNFSVAKEGRFDEEESSVDDSSGVSMSKVFSQLIKSEGR.

A signal peptide spans Met-1–Gly-24. At Tyr-25–Met-406 the chain is on the extracellular side. Asn-40, Asn-216, Asn-279, and Asn-380 each carry an N-linked (GlcNAc...) asparagine glycan. Residues Ile-407–Leu-427 traverse the membrane as a helical segment. The Cytoplasmic portion of the chain corresponds to Tyr-428–Arg-829. Residues Phe-482–Ala-755 enclose the Protein kinase domain. ATP is bound by residues Ile-488–Val-496 and Lys-510. The active-site Proton acceptor is the Asp-606.

The protein belongs to the protein kinase superfamily. Ser/Thr protein kinase family.

The protein resides in the cell membrane. This Arabidopsis thaliana (Mouse-ear cress) protein is Probable receptor-like protein kinase At5g59700.